The chain runs to 458 residues: Alpha-2C adrenergic receptor (458 aa).

Topologically, residues 1–51 (MASPALAAALAAAAAEGPNGSDAGEWGSGGGANASGTDWGPPPGQYSAGAV) are extracellular. Asparagine 19 and asparagine 33 each carry an N-linked (GlcNAc...) asparagine glycan. A helical membrane pass occupies residues 52 to 76 (AGLAAVVGFLIVFTVVGNVLVVIAV). The Cytoplasmic segment spans residues 77-88 (LTSRALRAPQNL). The helical transmembrane segment at 89–114 (FLVSLASADILVATLVMPFSLANELM) threads the bilayer. Residues 115-124 (AYWYFGQVWC) are Extracellular-facing. A disulfide bridge connects residues cysteine 124 and cysteine 202. Residues 125-147 (GVYLALDVLFCTSSIVHLCAISL) traverse the membrane as a helical segment. The Cytoplasmic segment spans residues 148–168 (DRYWSVTQAVEYNLKRTPRRV). A helical transmembrane segment spans residues 169 to 191 (KATIVAVWLISAVISFPPLVSFY). Residues 192 to 207 (RRPDGAAYPQCGLNDE) lie on the Extracellular side of the membrane. A helical membrane pass occupies residues 208–231 (TWYILSSCIGSFFAPCLIMGLVYA). The Cytoplasmic segment spans residues 232–379 (RIYRVAKLRT…QAREKRFTFV (148 aa)). Residues 245 to 343 (SEKRGPAGPD…SPGPGGRLSR (99 aa)) form a disordered region. Over residues 291–303 (RRRRRGALRRGGR) the composition is skewed to basic residues. A helical transmembrane segment spans residues 380 to 403 (LAVVMGVFVLCWFPFFFSYSLYGI). Residues 404-416 (CREACQLPEPLFK) lie on the Extracellular side of the membrane. Residues 417-437 (FFFWIGYCNSSLNPVIYTVFN) traverse the membrane as a helical segment. The Cytoplasmic portion of the chain corresponds to 438–458 (QDFRRSFKHILFRRRRRGFRQ).

It belongs to the G-protein coupled receptor 1 family. Adrenergic receptor subfamily. ADRA2C sub-subfamily.

The protein resides in the cell membrane. In terms of biological role, alpha-2 adrenergic receptors mediate the catecholamine-induced inhibition of adenylate cyclase through the action of G proteins. The polypeptide is Alpha-2C adrenergic receptor (Adra2c) (Rattus norvegicus (Rat)).